We begin with the raw amino-acid sequence, 226 residues long: High affinity heme transporter (226 aa).

An N-terminal signal peptide occupies residues 1–20 (MISLKIYFVLIFLFLKGINS). The segment at 72 to 101 (CDTTILSETNNVTGSCYVANCANDTVLEIC) is heme binding. A lipid anchor (GPI-anchor amidated serine) is attached at Ser199. The propeptide at 200 to 226 (SASSTIFKPSYFISCLLSVGLYLVLNF) is removed in mature form.

Its subcellular location is the cell membrane. It localises to the vacuole membrane. In terms of biological role, high affinity heme transporter involved in the assimilation of exogenous heme during conditions of low cellular iron. The chain is High affinity heme transporter from Schizosaccharomyces pombe (strain 972 / ATCC 24843) (Fission yeast).